The following is a 256-amino-acid chain: Imidazole glycerol phosphate synthase subunit HisF (256 aa).

Residues aspartate 11 and aspartate 130 contribute to the active site.

The protein belongs to the HisA/HisF family. Heterodimer of HisH and HisF.

The protein localises to the cytoplasm. The catalysed reaction is 5-[(5-phospho-1-deoxy-D-ribulos-1-ylimino)methylamino]-1-(5-phospho-beta-D-ribosyl)imidazole-4-carboxamide + L-glutamine = D-erythro-1-(imidazol-4-yl)glycerol 3-phosphate + 5-amino-1-(5-phospho-beta-D-ribosyl)imidazole-4-carboxamide + L-glutamate + H(+). The protein operates within amino-acid biosynthesis; L-histidine biosynthesis; L-histidine from 5-phospho-alpha-D-ribose 1-diphosphate: step 5/9. Its function is as follows. IGPS catalyzes the conversion of PRFAR and glutamine to IGP, AICAR and glutamate. The HisF subunit catalyzes the cyclization activity that produces IGP and AICAR from PRFAR using the ammonia provided by the HisH subunit. The chain is Imidazole glycerol phosphate synthase subunit HisF from Synechococcus sp. (strain CC9605).